A 226-amino-acid chain; its full sequence is N-(5'-phosphoribosyl)anthranilate isomerase (226 aa).

Belongs to the TrpF family.

It catalyses the reaction N-(5-phospho-beta-D-ribosyl)anthranilate = 1-(2-carboxyphenylamino)-1-deoxy-D-ribulose 5-phosphate. It participates in amino-acid biosynthesis; L-tryptophan biosynthesis; L-tryptophan from chorismate: step 3/5. The polypeptide is N-(5'-phosphoribosyl)anthranilate isomerase (TRP1) (Saccharomyces kudriavzevii (strain ATCC MYA-4449 / AS 2.2408 / CBS 8840 / NBRC 1802 / NCYC 2889) (Yeast)).